The primary structure comprises 131 residues: MRHRKSGRQLNRNSSHRQAMFRNMAGSLVRHEIIKTTVAKAKELRRVVEPLITLAKSDSVANRRLAFARTRDAEVVGKLFTELGPRYQERPGGYTRILKCGLRAGDKAPMAYIELVGRPEAAQAVDVEAAE.

It belongs to the bacterial ribosomal protein bL17 family. Part of the 50S ribosomal subunit. Contacts protein L32.

The chain is Large ribosomal subunit protein bL17 from Shewanella baltica (strain OS223).